The following is a 989-amino-acid chain: Phosphoenolpyruvate carboxylase (989 aa).

Residues histidine 175 and lysine 630 contribute to the active site.

Belongs to the PEPCase type 1 family. Requires Mg(2+) as cofactor.

It carries out the reaction oxaloacetate + phosphate = phosphoenolpyruvate + hydrogencarbonate. Functionally, forms oxaloacetate, a four-carbon dicarboxylic acid source for the tricarboxylic acid cycle. This Prochlorococcus marinus (strain MIT 9515) protein is Phosphoenolpyruvate carboxylase.